A 585-amino-acid polypeptide reads, in one-letter code: L-gulonolactone oxidase 3 (585 aa).

Residues 1–24 (MRYSHTLQQFSILSFFVTIWTVQS) form the signal peptide. Residues 51 to 233 (KTCHAANVTY…SKVKLSIEKA (183 aa)) enclose the FAD-binding PCMH-type domain.

The protein belongs to the oxygen-dependent FAD-linked oxidoreductase family. It depends on FAD as a cofactor.

It is found in the vacuole. The enzyme catalyses L-gulono-1,4-lactone + O2 = L-ascorbate + H2O2 + H(+). It functions in the pathway cofactor biosynthesis; L-ascorbate biosynthesis. Catalyzes the oxidation of L-gulono-1,4-lactone to ascorbic acid. L-gulono-1,4-lactone is oxidized to hydrogen peroxide and L-xylo-hexulonolactone which spontaneously isomerizes to L-ascorbate. The protein is L-gulonolactone oxidase 3 of Arabidopsis thaliana (Mouse-ear cress).